The chain runs to 356 residues: Inactive ubiquitin thioesterase OTULINL (356 aa).

The interval 1 to 22 (MAATRSPTRARERERSGAPAAG) is disordered. Residues 1 to 83 (MAATRSPTRA…KWWIGYLQRK (83 aa)) are required for membrane binding. An OTU domain is found at 128-356 (KCVRQVRRDN…NDRHYHIPVF (229 aa)).

It belongs to the peptidase C65 family. Otulin subfamily. As to quaternary structure, does not bind ubiquitin or ubiquitin-like proteins.

It is found in the cytoplasm. It localises to the endoplasmic reticulum membrane. The protein localises to the nucleus envelope. Its function is as follows. Lacks deubiquitinase activity. This is Inactive ubiquitin thioesterase OTULINL from Homo sapiens (Human).